A 664-amino-acid polypeptide reads, in one-letter code: DNA ligase (664 aa).

NAD(+) is bound by residues 34 to 38 (DAEYD), 83 to 84 (SL), and Glu114. Lys116 functions as the N6-AMP-lysine intermediate in the catalytic mechanism. Arg137, Glu172, Lys288, and Lys312 together coordinate NAD(+). Zn(2+)-binding residues include Cys406, Cys409, Cys424, and Cys429. One can recognise a BRCT domain in the interval 586-664 (VRDNRLEGLT…EEEFRQMVMS (79 aa)).

This sequence belongs to the NAD-dependent DNA ligase family. LigA subfamily. The cofactor is Mg(2+). Mn(2+) is required as a cofactor.

It carries out the reaction NAD(+) + (deoxyribonucleotide)n-3'-hydroxyl + 5'-phospho-(deoxyribonucleotide)m = (deoxyribonucleotide)n+m + AMP + beta-nicotinamide D-nucleotide.. DNA ligase that catalyzes the formation of phosphodiester linkages between 5'-phosphoryl and 3'-hydroxyl groups in double-stranded DNA using NAD as a coenzyme and as the energy source for the reaction. It is essential for DNA replication and repair of damaged DNA. The protein is DNA ligase of Carboxydothermus hydrogenoformans (strain ATCC BAA-161 / DSM 6008 / Z-2901).